The following is a 209-amino-acid chain: uncharacterized protein (209 aa).

Active-site charge relay system residues include Ser119 and His160.

This sequence belongs to the peptidase S51 family.

This is an uncharacterized protein from Listeria innocua serovar 6a (strain ATCC BAA-680 / CLIP 11262).